The following is a 210-amino-acid chain: S-norcoclaurine synthase (210 aa).

Positions 1-19 are cleaved as a signal peptide; the sequence is MMKMEVVFVFLMLLGTINC. 108–110 lines the dopamine pocket; it reads YKE. Lysine 122 acts as the Proton donor in catalysis. Residue aspartate 141 participates in (4-hydroxyphenyl)acetaldehyde binding.

It belongs to the BetVI family. Concentration-dependent dimerization, but mainly monomeric at concentrations around 10 uM. Expressed most abundantly in the rhizomes and to a lesser extent in petioles, roots, leaves and flower buds.

It catalyses the reaction (4-hydroxyphenyl)acetaldehyde + dopamine = (S)-norcoclaurine + H2O. Involved in the biosynthesis of the common precursor of all benzylisoquinoline alkaloids such as morphine, sanguinarine, codeine or berberine. Condenses dopamine and 4-hydroxyphenylacetaldehyde. This Thalictrum flavum subsp. glaucum (Yellow meadow rue) protein is S-norcoclaurine synthase.